Reading from the N-terminus, the 287-residue chain is tRNA pseudouridine synthase B (287 aa).

D38 acts as the Nucleophile in catalysis.

This sequence belongs to the pseudouridine synthase TruB family. Type 1 subfamily.

The enzyme catalyses uridine(55) in tRNA = pseudouridine(55) in tRNA. In terms of biological role, responsible for synthesis of pseudouridine from uracil-55 in the psi GC loop of transfer RNAs. The polypeptide is tRNA pseudouridine synthase B (Fusobacterium nucleatum subsp. nucleatum (strain ATCC 25586 / DSM 15643 / BCRC 10681 / CIP 101130 / JCM 8532 / KCTC 2640 / LMG 13131 / VPI 4355)).